The following is a 172-amino-acid chain: Large ribosomal subunit protein uL10 (172 aa).

It belongs to the universal ribosomal protein uL10 family. As to quaternary structure, part of the ribosomal stalk of the 50S ribosomal subunit. The N-terminus interacts with L11 and the large rRNA to form the base of the stalk. The C-terminus forms an elongated spine to which L12 dimers bind in a sequential fashion forming a multimeric L10(L12)X complex.

In terms of biological role, forms part of the ribosomal stalk, playing a central role in the interaction of the ribosome with GTP-bound translation factors. This Caulobacter vibrioides (strain ATCC 19089 / CIP 103742 / CB 15) (Caulobacter crescentus) protein is Large ribosomal subunit protein uL10 (rplJ).